The sequence spans 288 residues: General transcription factor IIE subunit 2 (288 aa).

Residues 16–56 form a disordered region; that stretch reads ALTTPAVEKRPSASSESSKKKRAKLELSSTSGSKPSSDGSN. Positions 41-56 are enriched in low complexity; the sequence is ELSSTSGSKPSSDGSN. A DNA-binding region (TFIIE beta) is located at residues 63 to 143; the sequence is SLSGSSGYKF…YAFKPKYNLK (81 aa).

The protein belongs to the TFIIE beta subunit family. Tetramer of two alpha and two beta chains.

It is found in the nucleus. In terms of biological role, recruits TFIIH to the initiation complex and stimulates the RNA polymerase II C-terminal domain kinase and DNA-dependent ATPase activities of TFIIH. Both TFIIH and TFIIE are required for promoter clearance by RNA polymerase. This is General transcription factor IIE subunit 2 (gtf2e2) from Xenopus laevis (African clawed frog).